The chain runs to 406 residues: Protein IWS1 homolog 2 (406 aa).

2 disordered regions span residues M1 to R28 and D41 to V89. A compositionally biased stretch (basic and acidic residues) spans E10–F24. The span at D41 to D56 shows a compositional bias: acidic residues. Residues K69 to T78 are compositionally biased toward basic and acidic residues. Residues N201 to K284 form the TFIIS N-terminal domain.

The protein belongs to the IWS1 family.

It localises to the nucleus. In terms of biological role, transcription factor involved in RNA polymerase II (RNAPII) transcription regulation. Involved in transcription elongation. May function at post-recruitment and elongation steps of transcription. This chain is Protein IWS1 homolog 2, found in Arabidopsis thaliana (Mouse-ear cress).